Here is a 184-residue protein sequence, read N- to C-terminus: Protein Syd (184 aa).

Belongs to the Syd family.

The protein localises to the cell inner membrane. Its function is as follows. Interacts with the SecY protein in vivo. May bind preferentially to an uncomplexed state of SecY, thus functioning either as a chelating agent for excess SecY in the cell or as a regulatory factor that negatively controls the translocase function. This chain is Protein Syd, found in Photobacterium profundum (strain SS9).